A 602-amino-acid polypeptide reads, in one-letter code: UvrABC system protein C (602 aa).

The 86-residue stretch at 15 to 100 (DQSGVYHYFD…IKQLKPKYNI (86 aa)) folds into the GIY-YIG domain. Residues 206–241 (SKLISRLKERMEKLAENLRFEEAGELRDRIEKIKRI) form the UVR domain.

Belongs to the UvrC family. In terms of assembly, interacts with UvrB in an incision complex.

Its subcellular location is the cytoplasm. In terms of biological role, the UvrABC repair system catalyzes the recognition and processing of DNA lesions. UvrC both incises the 5' and 3' sides of the lesion. The N-terminal half is responsible for the 3' incision and the C-terminal half is responsible for the 5' incision. This chain is UvrABC system protein C, found in Wolinella succinogenes (strain ATCC 29543 / DSM 1740 / CCUG 13145 / JCM 31913 / LMG 7466 / NCTC 11488 / FDC 602W) (Vibrio succinogenes).